A 261-amino-acid chain; its full sequence is Cytochrome c oxidase subunit 3 (261 aa).

The Mitochondrial matrix portion of the chain corresponds to 1-15 (MAHQAHAYHMVDPSP). Residues 16–34 (WPLTGAIGALFLTSGLAIW) form a helical membrane-spanning segment. The Mitochondrial intermembrane segment spans residues 35–40 (FHFQSV). A helical membrane pass occupies residues 41–66 (TLLTLGLILLLLTMYQWWRDIIREGT). The Mitochondrial matrix segment spans residues 67–72 (FQGHHT). A helical transmembrane segment spans residues 73 to 105 (PPVQKGLRYGMILFITSEVFFFLGFFWAFYHSS). Over 106-128 (LAPTPELGGCWPPTGITPLDPFE) the chain is Mitochondrial intermembrane. A helical transmembrane segment spans residues 129–152 (VPLLNTAVLLASGVTVTWAHHSLM). The Mitochondrial matrix segment spans residues 153–155 (EGA). The helical transmembrane segment at 156–183 (RKQAIQALALTIILGVYFTALQAMEYYE) threads the bilayer. The Mitochondrial intermembrane segment spans residues 184-190 (APFTIAD). The chain crosses the membrane as a helical span at residues 191-223 (GVYGSTFFVATGFHGLHVIIGSSFLAVCLLRQI). The Mitochondrial matrix segment spans residues 224-232 (QYHFTSEHH). The chain crosses the membrane as a helical span at residues 233–256 (FGFEAAAWYWHFVDVVWLFLYVSI). Topologically, residues 257 to 261 (YWWGS) are mitochondrial intermembrane.

It belongs to the cytochrome c oxidase subunit 3 family. Component of the cytochrome c oxidase (complex IV, CIV), a multisubunit enzyme composed of 14 subunits. The complex is composed of a catalytic core of 3 subunits MT-CO1, MT-CO2 and MT-CO3, encoded in the mitochondrial DNA, and 11 supernumerary subunits COX4I, COX5A, COX5B, COX6A, COX6B, COX6C, COX7A, COX7B, COX7C, COX8 and NDUFA4, which are encoded in the nuclear genome. The complex exists as a monomer or a dimer and forms supercomplexes (SCs) in the inner mitochondrial membrane with NADH-ubiquinone oxidoreductase (complex I, CI) and ubiquinol-cytochrome c oxidoreductase (cytochrome b-c1 complex, complex III, CIII), resulting in different assemblies (supercomplex SCI(1)III(2)IV(1) and megacomplex MCI(2)III(2)IV(2)).

Its subcellular location is the mitochondrion inner membrane. It carries out the reaction 4 Fe(II)-[cytochrome c] + O2 + 8 H(+)(in) = 4 Fe(III)-[cytochrome c] + 2 H2O + 4 H(+)(out). Its function is as follows. Component of the cytochrome c oxidase, the last enzyme in the mitochondrial electron transport chain which drives oxidative phosphorylation. The respiratory chain contains 3 multisubunit complexes succinate dehydrogenase (complex II, CII), ubiquinol-cytochrome c oxidoreductase (cytochrome b-c1 complex, complex III, CIII) and cytochrome c oxidase (complex IV, CIV), that cooperate to transfer electrons derived from NADH and succinate to molecular oxygen, creating an electrochemical gradient over the inner membrane that drives transmembrane transport and the ATP synthase. Cytochrome c oxidase is the component of the respiratory chain that catalyzes the reduction of oxygen to water. Electrons originating from reduced cytochrome c in the intermembrane space (IMS) are transferred via the dinuclear copper A center (CU(A)) of subunit 2 and heme A of subunit 1 to the active site in subunit 1, a binuclear center (BNC) formed by heme A3 and copper B (CU(B)). The BNC reduces molecular oxygen to 2 water molecules using 4 electrons from cytochrome c in the IMS and 4 protons from the mitochondrial matrix. The protein is Cytochrome c oxidase subunit 3 (mt-co3) of Formosania lacustris (Oriental stream loach).